The sequence spans 122 residues: Large ribosomal subunit protein uL14c (122 aa).

It belongs to the universal ribosomal protein uL14 family. In terms of assembly, part of the 50S ribosomal subunit.

It is found in the plastid. Its subcellular location is the chloroplast. In terms of biological role, binds to 23S rRNA. This is Large ribosomal subunit protein uL14c from Angiopteris evecta (Mule's foot fern).